The primary structure comprises 523 residues: Transmembrane protein 266 (523 aa).

Residues 1–94 (MTNPQPAIEG…VFLLSASLNS (94 aa)) lie on the Cytoplasmic side of the membrane. The chain crosses the membrane as a helical span at residues 95-115 (FLVACVILVVILLTLELLIDI). Topologically, residues 116–121 (KLLQFS) are extracellular. A helical membrane pass occupies residues 122-142 (SAFQFAGVIHWISLVILSVFF). At 143–161 (SETVLRIVVLGIWDYIENK) the chain is on the cytoplasmic side. Residues 162–182 (IEVFDGAVIILSLAPMVASTV) traverse the membrane as a helical segment. Topologically, residues 183–191 (ANGPRSPWD) are extracellular. Residues 192 to 212 (AISLIIMLRIWRVKRVIDAYV) traverse the membrane as a helical segment. At 213-523 (LPVKLEMEMV…EQKLHRVPEA (311 aa)) the chain is on the cytoplasmic side. Residues 218–270 (EMEMVIQQYEKAKVIQDEQLERLTQICQEQGFEIRQLRAHLAQQDLDLAAERE) adopt a coiled-coil conformation. Positions 380-477 (SASRSSVTRA…PELEHRVSLF (98 aa)) are disordered. Low complexity predominate over residues 382–397 (SRSSVTRAQSDSSQTL). Residues 398 to 411 (GSSMDCSTAREEPS) show a composition bias toward polar residues. The segment covering 421–430 (LPSQQQVEEA) has biased composition (pro residues).

As to quaternary structure, homodimer; disulfide-linked. In terms of tissue distribution, mainly expressed in the cerebellum. Also expressed in cerebral cortex, skeletal muscle and thyroid, but at much lower levels.

The protein resides in the cell membrane. It localises to the cell projection. The protein localises to the dendrite. Its subcellular location is the perikaryon. Voltage-sensor protein present on the post-synaptic side of glutamatergic mossy fibers and granule cells in the cerebellum. Despite the presence of a voltage-sensor segment, does not form a functional ion channel and its precise role remains unclear. Undergoes both rapid and slow structural rearrangements in response to changes in voltage. Contains a zinc-binding site that can regulate the slow conformational transition. The sequence is that of Transmembrane protein 266 from Homo sapiens (Human).